We begin with the raw amino-acid sequence, 532 residues long: MATRDLPHSVGDFCFGWVDQIRSEITLGKSQDQLIKEDVLEDDETVETKVEIKNLWPAFASGAGLFSDGYVNAGISTVLSCLKKIYGDEFTKSNAMNNIGSIGFVGTVVGQLSFGYISDNFDRKTGMLTANVMLIFFTLMCAVASWGTTVQGFFACLTVWRFFLGIAIGAEYPTSSVIASEFANQLPSGHRNRYFSWFTNAMIDFGFVVSSFVPLVLLWIFTPRHLRAVWRLSIGLGVIPPLILFFIRLKMDNSKSFKKMNMKRVNYSKYPWWLIIKFYWFRLTVVSLIWFIYDFSVYSFGTFNTIIIGEVIPNGTLYENWGWSVVFNLFYMPGAFLGAFIGDYLGPRLTLAIGVGAQGIIGIAMSACLKSLKKHVAGFVVVFGIFSTFGEFGPGNNTGLLASKTCASSIRGQYYGIAAAIGKIGAFVGTWVFPAIQKHYAYSEDLSLQVPFYVSSALCLFSAFLTIFFVPPVGQDAINKEDRLFKEYLEENGVDIRLLGDSGVVTQYQEDEDIGVISDEKDDTVKVQQKNV.

The next 6 helical transmembrane spans lie at Leu-55–Ile-75, Asn-98–Ser-118, Gly-126–Trp-146, Val-150–Ala-170, Ala-201–Phe-221, and Val-229–Leu-249. Residue Asn-266 is glycosylated (N-linked (GlcNAc...) asparagine). Residues Trp-272–Ile-292 traverse the membrane as a helical segment. The N-linked (GlcNAc...) asparagine glycan is linked to Asn-314. The next 3 helical transmembrane spans lie at Trp-321–Ile-341, Leu-349–Leu-369, and His-375–Gly-395. N-linked (GlcNAc...) asparagine glycosylation is present at Asn-396. A run of 2 helical transmembrane segments spans residues Gly-416–Ile-436 and Val-450–Val-470.

Belongs to the major facilitator superfamily. Sugar transporter (TC 2.A.1.1) family.

It is found in the cell membrane. It carries out the reaction sn-glycerol 3-phosphocholine(out) = sn-glycerol 3-phosphocholine(in). Functionally, glycerophosphodiester transporter that mediates uptake of glycerophosphocholine (GroPCho) with GIT3. Does not possess detectable glycerophosphoinositol (GroPIns) transport activity. The expanded ability to utilize GroPIns and GroPCho results from the organism's pathogenic nature and its need to occupy a variety of environments within its host organism. This possibility is buttressed by the fact that GroPIns and GroPCho are present and abundant in human fluids. This Candida albicans (strain SC5314 / ATCC MYA-2876) (Yeast) protein is Glycerophosphocholine permease GIT4.